A 257-amino-acid chain; its full sequence is 5-keto-4-deoxy-D-glucarate aldolase (257 aa).

H51 serves as the catalytic Proton acceptor. Q152 is a substrate binding site. Residue E154 participates in Mg(2+) binding. Residues S179 and D180 each contribute to the substrate site. Residue D180 participates in Mg(2+) binding.

This sequence belongs to the HpcH/HpaI aldolase family. KDGluc aldolase subfamily. As to quaternary structure, homohexamer; trimer of dimers. Mg(2+) is required as a cofactor.

It catalyses the reaction 5-dehydro-4-deoxy-D-glucarate = 2-hydroxy-3-oxopropanoate + pyruvate. The enzyme catalyses 2-dehydro-3-deoxy-D-glucarate = 2-hydroxy-3-oxopropanoate + pyruvate. It participates in carbohydrate acid metabolism; galactarate degradation; D-glycerate from galactarate: step 2/3. Catalyzes the reversible retro-aldol cleavage of both 5-keto-4-deoxy-D-glucarate and 2-keto-3-deoxy-D-glucarate to pyruvate and tartronic semialdehyde. The polypeptide is 5-keto-4-deoxy-D-glucarate aldolase (Citrobacter koseri (strain ATCC BAA-895 / CDC 4225-83 / SGSC4696)).